We begin with the raw amino-acid sequence, 380 residues long: MTFRSLLQEMRSRPHRVVHAAASTANSSDPFSWSELPEELLREILIRVETVDGGDWPSRRNVVACAGVCRSWRILTKEIVAVPEFSSKLTFPISLKQSGPRDSLVQCFIKRNRNTQSYHLYLGLTTSLTDNGKFLLAASKLKRATCTDYIISLRSDDISKRSNAYLGRMRSNFLGTKFTVFDGSQTGAAKMQKSRSSNFIKVSPRVPQGSYPIAHISYELNVLGSRGPRRMRCIMDTIPMSIVESRGVVASTSISSFSSRSSPVFRSHSKPLRSNSASCSDSGNNLGDPPLVLSNKAPRWHEQLRCWCLNFHGRVTVASVKNFQLVAVSDCEAGQTSERIILQFGKVGKDMFTMDYGYPISAFQAFAICLSSFETRIACE.

Residues 30 to 76 (PFSWSELPEELLREILIRVETVDGGDWPSRRNVVACAGVCRSWRILT) enclose the F-box domain. Positions 258 to 283 (SSRSSPVFRSHSKPLRSNSASCSDSG) are disordered. Residues 272–283 (LRSNSASCSDSG) show a composition bias toward polar residues.

Belongs to the TUB family. Part of a SCF (SKP1-cullin-F-box) protein ligase complex. Interacts with SKP1A/ASK1 and XERICO. In terms of tissue distribution, ubiquitous.

The protein operates within protein modification; protein ubiquitination. Component of SCF(ASK-cullin-F-box) E3 ubiquitin ligase complexes, which may mediate the ubiquitination and subsequent proteasomal degradation of target proteins. Confers sensitivity to ABA during seed germination and early seedling development. This is Tubby-like F-box protein 9 from Arabidopsis thaliana (Mouse-ear cress).